Consider the following 211-residue polypeptide: ATP phosphoribosyltransferase (211 aa).

Belongs to the ATP phosphoribosyltransferase family. Short subfamily. In terms of assembly, heteromultimer composed of HisG and HisZ subunits.

The protein resides in the cytoplasm. It catalyses the reaction 1-(5-phospho-beta-D-ribosyl)-ATP + diphosphate = 5-phospho-alpha-D-ribose 1-diphosphate + ATP. It functions in the pathway amino-acid biosynthesis; L-histidine biosynthesis; L-histidine from 5-phospho-alpha-D-ribose 1-diphosphate: step 1/9. Its function is as follows. Catalyzes the condensation of ATP and 5-phosphoribose 1-diphosphate to form N'-(5'-phosphoribosyl)-ATP (PR-ATP). Has a crucial role in the pathway because the rate of histidine biosynthesis seems to be controlled primarily by regulation of HisG enzymatic activity. This is ATP phosphoribosyltransferase from Bacillus mycoides (strain KBAB4) (Bacillus weihenstephanensis).